The primary structure comprises 213 residues: Inactive ribonuclease-like protein 10 (213 aa).

An N-terminal signal peptide occupies residues 1–24; the sequence is MKLTLVQFFFMMLLLLLGLGVGLG. A glycan (N-linked (GlcNAc...) asparagine) is linked at Asn128.

The protein belongs to the pancreatic ribonuclease family. Post-translationally, the N-terminus is blocked. Glycosylated. As to expression, male-specific expression in proximal caput of the epididymis.

The protein localises to the secreted. Its function is as follows. Secreted proximal epididymal protein required for post-testicular sperm maturation and male fertility. May be involved in sperm adhesion to the egg zona pellucida. Does not have ribonuclease activity. The sequence is that of Inactive ribonuclease-like protein 10 (RNASE10) from Sus scrofa (Pig).